We begin with the raw amino-acid sequence, 170 residues long: Cathelicidin antimicrobial peptide (170 aa).

The signal sequence occupies residues 1-30 (MDTQRDSPSLGRWSLVLLLLGLVMPLAIVA). The propeptide at 31–131 (QVLSYQEAVL…DISCDKDNRR (101 aa)) is cathelin-like domain (CLD). Disulfide bonds link C86–C97 and C108–C125. Residues 150 to 162 (FKRIVQRIKDFLQ) are active core.

It belongs to the cathelicidin family. In terms of assembly, monomer, homodimer or homotrimer (in vitro). Oligomerizes as tetra- or hexamer in solution (in vitro). In terms of processing, proteolytically cleaved by proteinase PRTN3 into antibacterial peptide LL-37. Proteolytically cleaved by cathepsin CTSG and neutrophil elastase ELANE. Post-translationally, resistant to proteolytic degradation in solution, and when bound to both zwitterionic (mimicking mammalian membranes) and negatively charged membranes (mimicking bacterial membranes). After secretion onto the skin surface, the CAMP gene product is processed by a serine protease-dependent mechanism into multiple novel antimicrobial peptides distinct from and shorter than cathelicidin LL-37. These peptides show enhanced antimicrobial action, acquiring the ability to kill skin pathogens such as S.aureus, E.coli and C.albicans. These peptides have lost the ability to stimulate CXCL8/IL8 release from keratinocytes. The peptides act synergistically, killing bacteria at lower concentrations when present together, and maintain activity at increased salt condition.

It localises to the secreted. The protein localises to the vesicle. Antimicrobial protein that is an integral component of the innate immune system. Binds to bacterial lipopolysaccharides (LPS). Acts via neutrophil N-formyl peptide receptors to enhance the release of CXCL2. Postsecretory processing generates multiple cathelicidin antimicrobial peptides with various lengths which act as a topical antimicrobial defense in sweat on skin. The unprocessed precursor form, cathelicidin antimicrobial peptide, inhibits the growth of Gram-negative E.coli and E.aerogenes with efficiencies comparable to that of the mature peptide LL-37 (in vitro). In terms of biological role, antimicrobial peptide that is an integral component of the innate immune system. Binds to bacterial lipopolysaccharides (LPS). Causes membrane permeabilization by forming transmembrane pores (in vitro). Causes lysis of E.coli. Exhibits antimicrobial activity against Gram-negative bacteria such as P.aeruginosa, S.typhimurium, E.aerogenes, E.coli and P.syringae, Gram-positive bacteria such as L.monocytogenes, S.epidermidis, S.pyogenes and S.aureus, as well as vancomycin-resistant enterococci (in vitro). Exhibits antimicrobial activity against methicillin-resistant S.aureus, P.mirabilis, and C.albicans in low-salt media, but not in media containing 100 mM NaCl (in vitro). Forms chiral supramolecular assemblies with quinolone signal (PQS) molecules of P.aeruginosa, which may lead to interference of bacterial quorum signaling and perturbance of bacterial biofilm formation. May form supramolecular fiber-like assemblies on bacterial membranes. Induces cytokine and chemokine producation as well as TNF/TNFA and CSF2/GMCSF production in normal human keratinocytes. Exhibits hemolytic activity against red blood cells. Functionally, exhibits antimicrobial activity against E.coli and B.megaterium (in vitro). In Nomascus leucogenys (Northern white-cheeked gibbon), this protein is Cathelicidin antimicrobial peptide.